A 348-amino-acid chain; its full sequence is MSSSQDKANLPANNSRARAKKLVLELQDEICAGLETIDGEGKFLEESWERPEGGGGRSRVLKDGQIFEQGGVNFSEVHGNELPPSIISQRPEAKGHSWFATGTSMVLHPKSPYIPTVHLNYRYFEAGPVWWFGGGADLTPFYPYLSDTRHFHSCHKNACDTIDKDLHKVFKPWCDEYFFLKHRNETRGVGGIFYDYQDGSGLLYKGQNANGKASKIAKELGEYSLNWENLFSLAKACGQAFLPSYEPIIKKRKNQSFSTKERDFQLYRRGRYAEFNLVWDRGTIFGLQTNGRTESILMSLPPLARWEYGYKPEENSREALLTDLFTKPQDWFTDKSLEKRCLTHQALD.

Residue serine 104 participates in substrate binding. The a divalent metal cation site is built by histidine 108 and histidine 118. The active-site Proton donor is the histidine 118. Substrate is bound at residue 120–122 (NYR). 2 residues coordinate a divalent metal cation: histidine 152 and histidine 182. Positions 272–307 (YAEFNLVWDRGTIFGLQTNGRTESILMSLPPLARWE) are important for dimerization.

The protein belongs to the aerobic coproporphyrinogen-III oxidase family. As to quaternary structure, homodimer. The cofactor is a divalent metal cation.

Its subcellular location is the cytoplasm. It carries out the reaction coproporphyrinogen III + O2 + 2 H(+) = protoporphyrinogen IX + 2 CO2 + 2 H2O. It functions in the pathway porphyrin-containing compound metabolism; protoporphyrin-IX biosynthesis; protoporphyrinogen-IX from coproporphyrinogen-III (O2 route): step 1/1. Involved in the heme and chlorophyll biosynthesis. Catalyzes the aerobic oxidative decarboxylation of propionate groups of rings A and B of coproporphyrinogen-III to yield the vinyl groups in protoporphyrinogen-IX. The protein is Oxygen-dependent coproporphyrinogen-III oxidase of Prochlorococcus marinus (strain NATL2A).